The primary structure comprises 684 residues: DNA ligase (684 aa).

NAD(+) contacts are provided by residues 48-52, 97-98, and Glu-129; these read DYEYD and SL. The active-site N6-AMP-lysine intermediate is Lys-131. NAD(+)-binding residues include Arg-152, Glu-189, Lys-310, and Lys-334. Positions 429, 432, 447, and 452 each coordinate Zn(2+). Residues 609 to 684 enclose the BRCT domain; it reads AQEGSLSGMS…ISWEELQAMI (76 aa).

It belongs to the NAD-dependent DNA ligase family. LigA subfamily. Mg(2+) serves as cofactor. It depends on Mn(2+) as a cofactor.

It catalyses the reaction NAD(+) + (deoxyribonucleotide)n-3'-hydroxyl + 5'-phospho-(deoxyribonucleotide)m = (deoxyribonucleotide)n+m + AMP + beta-nicotinamide D-nucleotide.. Functionally, DNA ligase that catalyzes the formation of phosphodiester linkages between 5'-phosphoryl and 3'-hydroxyl groups in double-stranded DNA using NAD as a coenzyme and as the energy source for the reaction. It is essential for DNA replication and repair of damaged DNA. The protein is DNA ligase of Bdellovibrio bacteriovorus (strain ATCC 15356 / DSM 50701 / NCIMB 9529 / HD100).